Reading from the N-terminus, the 132-residue chain is MAGTFTLRVVSPEGNVLKEEAEFVVLPGGNGEIGILPNHAPLISSIEIGVIRYTVNGKVEKIATSGGFVEVSDNKVTILADTAEPGEKVDLDRALAAKERAEKRLTQREGIDVRRAELALMRAVARINAARN.

Belongs to the ATPase epsilon chain family. F-type ATPases have 2 components, CF(1) - the catalytic core - and CF(0) - the membrane proton channel. CF(1) has five subunits: alpha(3), beta(3), gamma(1), delta(1), epsilon(1). CF(0) has three main subunits: a, b and c.

The protein resides in the cell membrane. Produces ATP from ADP in the presence of a proton gradient across the membrane. This chain is ATP synthase epsilon chain, found in Desulfitobacterium hafniense (strain Y51).